The sequence spans 121 residues: Large ribosomal subunit protein bL12 (121 aa).

This sequence belongs to the bacterial ribosomal protein bL12 family. Homodimer. Part of the ribosomal stalk of the 50S ribosomal subunit. Forms a multimeric L10(L12)X complex, where L10 forms an elongated spine to which 2 to 4 L12 dimers bind in a sequential fashion. Binds GTP-bound translation factors.

Functionally, forms part of the ribosomal stalk which helps the ribosome interact with GTP-bound translation factors. Is thus essential for accurate translation. In Psychromonas ingrahamii (strain DSM 17664 / CCUG 51855 / 37), this protein is Large ribosomal subunit protein bL12.